A 1141-amino-acid polypeptide reads, in one-letter code: Membrane-associated protein gex-3 (1141 aa).

The protein belongs to the HEM-1/HEM-2 family. In terms of assembly, interacts with aco-1, gei-13 and gex-2. Interacts with gex-3. As to expression, expressed in neurons.

The protein resides in the cytoplasm. Rac effector required for tissue morphogenesis, cell migrations and egg laying. May play a role in egg laying and in yolk protein clatherin-mediated endocytosis by oocytes during oogenesis. Plays a role in the formation of gap junctions between EA and EP endodermal precursor cells in embryos. The chain is Membrane-associated protein gex-3 from Caenorhabditis elegans.